Consider the following 131-residue polypeptide: Large ribosomal subunit protein bL12 (131 aa).

The protein belongs to the bacterial ribosomal protein bL12 family. In terms of assembly, homodimer. Part of the ribosomal stalk of the 50S ribosomal subunit. Forms a multimeric L10(L12)X complex, where L10 forms an elongated spine to which 2 to 4 L12 dimers bind in a sequential fashion. Binds GTP-bound translation factors.

Forms part of the ribosomal stalk which helps the ribosome interact with GTP-bound translation factors. Is thus essential for accurate translation. This chain is Large ribosomal subunit protein bL12, found in Prochlorococcus marinus (strain NATL1A).